Here is a 979-residue protein sequence, read N- to C-terminus: Oncostatin-M-specific receptor subunit beta (979 aa).

Positions 1-27 (MALFAVFQTTFFLTLLSLRTYQSEVLA) are cleaved as a signal peptide. Over 28–740 (ERLPLTPVSL…VTTPDEHSSM (713 aa)) the chain is Extracellular. The N-linked (GlcNAc...) asparagine glycan is linked to Asn163. A disulfide bond links Cys245 and Cys255. Residues Asn326 and Asn380 are each glycosylated (N-linked (GlcNAc...) asparagine). 4 consecutive Fibronectin type-III domains span residues 335–428 (NPFS…TLEA), 433–528 (APDV…DPEN), 529–623 (KEVE…SQEL), and 625–736 (PSDN…TPDE). Residues 415 to 419 (WSEWS) carry the WSXWS motif motif. Asn446 and Asn580 each carry an N-linked (GlcNAc...) asparagine glycan. The chain crosses the membrane as a helical span at residues 741 to 761 (LIHILLPMVFCVLLIMVMCYL). The Cytoplasmic portion of the chain corresponds to 762–979 (KSQWIKETCY…TLLDPGEHYC (218 aa)). The Box 1 motif signature appears at 770-778 (CYPDIPDPY). Ser826 and Ser889 each carry phosphoserine.

This sequence belongs to the type I cytokine receptor family. Type 2 subfamily. Heterodimer composed of OSMR and IL6ST (type II OSM receptor). Heterodimer with IL31RA to form the IL31 receptor. In terms of tissue distribution, expressed in keratinocytes (at protein level). Expressed at relatively high levels in all neural cells as well as fibroblast and epithelial cells.

It is found in the membrane. Associates with IL31RA to form the IL31 receptor. Binds IL31 to activate STAT3 and possibly STAT1 and STAT5. Capable of transducing OSM-specific signaling events. This chain is Oncostatin-M-specific receptor subunit beta (OSMR), found in Homo sapiens (Human).